We begin with the raw amino-acid sequence, 429 residues long: Enolase (429 aa).

Q162 serves as a coordination point for (2R)-2-phosphoglycerate. E204 (proton donor) is an active-site residue. D241, E283, and D310 together coordinate Mg(2+). K335, R364, S365, and K386 together coordinate (2R)-2-phosphoglycerate. Residue K335 is the Proton acceptor of the active site.

The protein belongs to the enolase family. The cofactor is Mg(2+).

It is found in the cytoplasm. The protein resides in the secreted. The protein localises to the cell surface. The enzyme catalyses (2R)-2-phosphoglycerate = phosphoenolpyruvate + H2O. Its pathway is carbohydrate degradation; glycolysis; pyruvate from D-glyceraldehyde 3-phosphate: step 4/5. In terms of biological role, catalyzes the reversible conversion of 2-phosphoglycerate (2-PG) into phosphoenolpyruvate (PEP). It is essential for the degradation of carbohydrates via glycolysis. This Mycobacterium bovis (strain BCG / Pasteur 1173P2) protein is Enolase.